The chain runs to 284 residues: Malonyl-[acyl-carrier protein] O-methyltransferase (284 aa).

It belongs to the methyltransferase superfamily.

It catalyses the reaction malonyl-[ACP] + S-adenosyl-L-methionine = malonyl-[ACP] methyl ester + S-adenosyl-L-homocysteine. It functions in the pathway cofactor biosynthesis; biotin biosynthesis. Converts the free carboxyl group of a malonyl-thioester to its methyl ester by transfer of a methyl group from S-adenosyl-L-methionine (SAM). It allows to synthesize pimeloyl-ACP via the fatty acid synthetic pathway. This is Malonyl-[acyl-carrier protein] O-methyltransferase from Legionella pneumophila subsp. pneumophila (strain Philadelphia 1 / ATCC 33152 / DSM 7513).